Consider the following 555-residue polypeptide: Transmembrane protein 87A (555 aa).

An N-terminal signal peptide occupies residues 1–21; that stretch reads MAAAAWLQVLPVILLLLGAHP. The Lumenal segment spans residues 22 to 225; it reads SPLSFFSAGP…YEYLTLEDYP (204 aa). Disulfide bonds link cysteine 74-cysteine 128 and cysteine 89-cysteine 431. 4 N-linked (GlcNAc...) asparagine glycosylation sites follow: asparagine 79, asparagine 127, asparagine 157, and asparagine 160. The helical transmembrane segment at 226–246 threads the bilayer; sequence LMIFFMVMCIVYVLFGVLWLA. The Cytoplasmic segment spans residues 247 to 257; the sequence is WSACYWRDLLR. The helical transmembrane segment at 258–278 threads the bilayer; the sequence is IQFWIGAVIFLGMLEKAVFYA. The Lumenal portion of the chain corresponds to 279–305; the sequence is EFQNIRYKGESVQGALILAELLSAVKR. Residues 306–322 form a helical membrane-spanning segment; that stretch reads SLARTLVIIVSLGYGIV. The Cytoplasmic portion of the chain corresponds to 323 to 325; the sequence is KPR. Residues 326–346 traverse the membrane as a helical segment; the sequence is LGVTLHKVVVAGALYLLFSGM. The Lumenal segment spans residues 347–361; it reads EGVLRVTGAQTDLAS. A helical membrane pass occupies residues 362-382; sequence LAFIPLAFLDTALCWWIFISL. At 383-403 the chain is on the cytoplasmic side; sequence TQTMKLLKLRRNIVKLSLYRH. A helical membrane pass occupies residues 404-424; the sequence is FTNTLILAVAASIVFIIWTTM. The Lumenal portion of the chain corresponds to 425-437; that stretch reads KFRIVTCQSDWRE. A helical membrane pass occupies residues 438–458; sequence LWVDDAIWRLLFSMILFVIMV. Residues 459–555 lie on the Cytoplasmic side of the membrane; the sequence is LWRPSANNQR…ITHFERSKME (97 aa). A disordered region spans residues 473–516; that stretch reads PLSEEEEEDEQKEPMLKESFEGMKMRSTKQEPNGNSKVNKAQED. Residues 484 to 496 show a composition bias toward basic and acidic residues; sequence KEPMLKESFEGMK. Polar residues predominate over residues 502 to 511; that stretch reads QEPNGNSKVN. Serine 540 is modified (phosphoserine).

Belongs to the LU7TM family. TMEM87 subfamily. In terms of assembly, may interact with STOML3; STOML3 potentiates the mechanosensitive ion channel activity associated with TMEM87A.

The protein localises to the cell membrane. Its subcellular location is the golgi apparatus membrane. The protein resides in the cell projection. It is found in the ruffle. Functionally, potential monoatomic ion channel gated by mechanical force, implicated in normal touch sensitivity through the generation of mechanically activated currents. However, a direct channel activity is debated and an alternative could be that it functions as a chaperone for an unidentified mechanosensitive ion channel. Could also be involved in cell mechanosensitivity regulating cell adhesion and migration. May also be involved in retrograde transport from endosomes to the trans-Golgi network (TGN). The polypeptide is Transmembrane protein 87A (Homo sapiens (Human)).